A 112-amino-acid chain; its full sequence is MENRFEISMLIDYYGTLLTEKQFNVMTLYYNEDLSLAEIAEINKTSRQAIYDLIKRCSKQLHSYDEKLKLSKKVDKRYRIKEELMAELNKNSNLDEDIKKYIDEKLEEIINA.

Belongs to the UPF0122 family.

Its function is as follows. Might take part in the signal recognition particle (SRP) pathway. This is inferred from the conservation of its genetic proximity to ftsY/ffh. May be a regulatory protein. The chain is UPF0122 protein CPR_1686 from Clostridium perfringens (strain SM101 / Type A).